Consider the following 338-residue polypeptide: Putative peptide import ATP-binding protein BOV_A0348 (338 aa).

The 254-residue stretch at lysine 10–leucine 263 folds into the ABC transporter domain. Glycine 43–serine 50 contributes to the ATP binding site.

Belongs to the ABC transporter superfamily. As to quaternary structure, the complex is composed of two ATP-binding proteins (BOV_A0347 and BOV_A0348), two transmembrane proteins (BOV_A0350 and BOV_A0351) and a solute-binding protein (BOV_A0352).

Its subcellular location is the cell inner membrane. Its function is as follows. Probably part of an ABC transporter complex that could be involved in peptide import. Probably responsible for energy coupling to the transport system. This Brucella ovis (strain ATCC 25840 / 63/290 / NCTC 10512) protein is Putative peptide import ATP-binding protein BOV_A0348.